Here is a 688-residue protein sequence, read N- to C-terminus: Translation initiation factor IF-2 (688 aa).

Composition is skewed to basic and acidic residues over residues 53–62 and 86–95; these read GKEKSEKTKE and KRDDKNEKVN. A disordered region spans residues 53–100; it reads GKEKSEKTKEEDDEIETTAKNPIKESMNNKKSNKRDDKNEKVNTENAE. One can recognise a tr-type G domain in the interval 187–354; the sequence is KRSPIITVMG…MILLSSEILE (168 aa). Residues 196 to 203 form a G1 region; sequence GHVDHGKT. 196-203 is a binding site for GTP; it reads GHVDHGKT. Residues 221–225 form a G2 region; the sequence is GITQH. The G3 stretch occupies residues 242–245; it reads DTPG. Residues 242-246 and 296-299 each bind GTP; these read DTPGH and NKID. Positions 296 to 299 are G4; that stretch reads NKID. The segment at 332-334 is G5; that stretch reads SAH.

This sequence belongs to the TRAFAC class translation factor GTPase superfamily. Classic translation factor GTPase family. IF-2 subfamily.

Its subcellular location is the cytoplasm. Its function is as follows. One of the essential components for the initiation of protein synthesis. Protects formylmethionyl-tRNA from spontaneous hydrolysis and promotes its binding to the 30S ribosomal subunits. Also involved in the hydrolysis of GTP during the formation of the 70S ribosomal complex. The protein is Translation initiation factor IF-2 of Clostridium botulinum (strain ATCC 19397 / Type A).